The following is a 393-amino-acid chain: NAD(P)H-quinone oxidoreductase subunit H, chloroplastic (393 aa).

Belongs to the complex I 49 kDa subunit family. In terms of assembly, NDH is composed of at least 16 different subunits, 5 of which are encoded in the nucleus.

It is found in the plastid. Its subcellular location is the chloroplast thylakoid membrane. It catalyses the reaction a plastoquinone + NADH + (n+1) H(+)(in) = a plastoquinol + NAD(+) + n H(+)(out). The catalysed reaction is a plastoquinone + NADPH + (n+1) H(+)(in) = a plastoquinol + NADP(+) + n H(+)(out). Functionally, NDH shuttles electrons from NAD(P)H:plastoquinone, via FMN and iron-sulfur (Fe-S) centers, to quinones in the photosynthetic chain and possibly in a chloroplast respiratory chain. The immediate electron acceptor for the enzyme in this species is believed to be plastoquinone. Couples the redox reaction to proton translocation, and thus conserves the redox energy in a proton gradient. This is NAD(P)H-quinone oxidoreductase subunit H, chloroplastic from Nasturtium officinale (Watercress).